A 103-amino-acid chain; its full sequence is MSLLEQVSVSKKANIYFDGKVASRSVFLADGSKQTLGVVLPGEYEFSTSQGEVMEVTSGRFEVLLPESTVWQEFSEGTQFELAANVSFKIRNTAIAEYCCSYL.

The protein belongs to the nucleoside phosphorylase PpnP family.

The catalysed reaction is a purine D-ribonucleoside + phosphate = a purine nucleobase + alpha-D-ribose 1-phosphate. It carries out the reaction adenosine + phosphate = alpha-D-ribose 1-phosphate + adenine. The enzyme catalyses cytidine + phosphate = cytosine + alpha-D-ribose 1-phosphate. It catalyses the reaction guanosine + phosphate = alpha-D-ribose 1-phosphate + guanine. The catalysed reaction is inosine + phosphate = alpha-D-ribose 1-phosphate + hypoxanthine. It carries out the reaction thymidine + phosphate = 2-deoxy-alpha-D-ribose 1-phosphate + thymine. The enzyme catalyses uridine + phosphate = alpha-D-ribose 1-phosphate + uracil. It catalyses the reaction xanthosine + phosphate = alpha-D-ribose 1-phosphate + xanthine. In terms of biological role, catalyzes the phosphorolysis of diverse nucleosides, yielding D-ribose 1-phosphate and the respective free bases. Can use uridine, adenosine, guanosine, cytidine, thymidine, inosine and xanthosine as substrates. Also catalyzes the reverse reactions. The sequence is that of Pyrimidine/purine nucleoside phosphorylase from Shewanella sp. (strain W3-18-1).